A 625-amino-acid polypeptide reads, in one-letter code: Somatic embryogenesis receptor kinase 1 (625 aa).

The first 26 residues, 1 to 26 (MESSYVVFILLSLILLPNHSLWLASA), serve as a signal peptide directing secretion. Over 27–238 (NLEGDALHTL…STPSGYGITG (212 aa)) the chain is Extracellular. The cysteines at positions 58 and 65 are disulfide-linked. Leucine-rich repeat receptor-like protein kinase binding stretches follow at residues 59–78 (TWFH…DLGN) and 97–102 (YLELYS). 61–62 (FH) serves as a coordination point for brassinolide. 4 LRR repeats span residues 92–116 (LKNL…LGNL), 118–140 (NLVS…LGKL), 141–164 (SKLR…LTNI), and 165–189 (TTLQ…SFSL). Asn-104 and Asn-115 each carry an N-linked (GlcNAc...) asparagine glycan. Leucine-rich repeat receptor-like protein kinase binding regions lie at residues 123-126 (DLYL) and 145-147 (FLR). 3 N-linked (GlcNAc...) asparagine glycosylation sites follow: Asn-150, Asn-163, and Asn-184. A leucine-rich repeat receptor-like protein kinase binding region spans residues 171-194 (DLSNNRLSGSVPDNGSFSLFTPIS). A disulfide bridge links Cys-202 with Cys-210. The helical transmembrane segment at 239-259 (AIAGGVAAGAALLFAAPAIAF) threads the bilayer. Residues 260–625 (AWWRRRKPLD…LHAVELSGPR (366 aa)) are Cytoplasmic-facing. Phosphoserine is present on residues Ser-291, Ser-299, and Ser-303. The Protein kinase domain maps to 302–589 (FSNKNILGRG…GLAEKWDEWQ (288 aa)). 308-316 (LGRGGFGKV) is an ATP binding site. Thr-325 bears the Phosphothreonine mark. An ATP-binding site is contributed by Lys-330. Thr-337 and Thr-346 each carry phosphothreonine. A phosphoserine mark is found at Ser-352, Ser-383, Ser-386, and Ser-394. Thr-402 is subject to Phosphothreonine. Position 415 is a phosphoserine (Ser-415). Residue Asp-429 is the Proton acceptor of the active site. Tyr-456 bears the Phosphotyrosine mark. Phosphothreonine is present on residues Thr-459, Thr-462, Thr-463, and Thr-468. A Phosphotyrosine modification is found at Tyr-476. Ser-478 is modified (phosphoserine). A Phosphothreonine modification is found at Thr-479. Ser-483 carries the post-translational modification Phosphoserine. Thr-541 carries the post-translational modification Phosphothreonine. Tyr-543 is modified (phosphotyrosine). Thr-559 bears the Phosphothreonine mark. 2 positions are modified to phosphoserine: Ser-606 and Ser-612. The residue at position 613 (Thr-613) is a Phosphothreonine. Tyr-614 carries the post-translational modification Phosphotyrosine. Position 622 is a phosphoserine (Ser-622).

The protein belongs to the protein kinase superfamily. Ser/Thr protein kinase family. Monomer, homo- and heterodimer. Interacts with KAPP, CDC48A, GRF6 or GRF7, SERK2, BRI1 and SERK3/BAK1 to form the SERK1 signaling complex. Bind to BRI1 in a brassinolide-dependent manner. Heterodimer with PSKR1. Interacts with the EF-Tu receptor EFR and FLS2 in a specific ligand-induced manner. Interacts with ERECTA in a EPF2-induced manner. Interacts with ERL1 in a EPF1-induced manner. Interacts with TMM. In the presence of the signal peptide RGF1, interacts with RGI1/RGFR4/RCH2, RGI2/RGFR3/RCH1, RGI3/RGFR1, RGI4/RGFR2/SKM2 and RGI5/RGFR5. Requires Mg(2+) as cofactor. Glycosylated. Important for targeting to the plasma membrane. Post-translationally, intermolecular autophosphorylation. The catalytic activity of SERK1 depends on the presence of a phosphorylated Thr residue in SERK1. The phosphorylation is induced by brassinosteroids. Transphosphorylation by BRI1 occurs only on Ser-299 and Thr-462. Dephosphorylation of threonine residues by the kinase-associated protein phosphatase (KAPP) is involved in SERK1 endocytosis. As to expression, expressed in flowers, tapetum, developing microspores, all cells of the embryo sac, provascular strands and developing vascular bundles. Low expression in adult vascular tissue. Detected in root meristem.

The protein localises to the cell membrane. It is found in the endoplasmic reticulum membrane. It carries out the reaction L-seryl-[protein] + ATP = O-phospho-L-seryl-[protein] + ADP + H(+). The catalysed reaction is L-threonyl-[protein] + ATP = O-phospho-L-threonyl-[protein] + ADP + H(+). It catalyses the reaction L-tyrosyl-[protein] + ATP = O-phospho-L-tyrosyl-[protein] + ADP + H(+). With respect to regulation, inhibited by manganese. In terms of biological role, dual specificity kinase acting on both serine/threonine- and tyrosine-containing substrates. Phosphorylates BRI1 on 'Ser-887' and CDC48 on at least one threonine residue and on 'Ser-41'. Confers embryogenic competence. Acts redundantly with SERK2 as a control point for sporophytic development controlling male gametophyte production. Involved in the brassinolide signaling pathway. Probably required during small peptide (e.g. RGF1) signaling. Involved in the perception of phytosulfokine and subsequent signal transduction. Acts as a RLK5 coreceptor and promotes high-affinity IDA sensing, thus being a positive regulator of floral abscission. This is Somatic embryogenesis receptor kinase 1 from Arabidopsis thaliana (Mouse-ear cress).